Here is a 287-residue protein sequence, read N- to C-terminus: Phosphoribosylaminoimidazole-succinocarboxamide synthase (287 aa).

It belongs to the SAICAR synthetase family.

The enzyme catalyses 5-amino-1-(5-phospho-D-ribosyl)imidazole-4-carboxylate + L-aspartate + ATP = (2S)-2-[5-amino-1-(5-phospho-beta-D-ribosyl)imidazole-4-carboxamido]succinate + ADP + phosphate + 2 H(+). It functions in the pathway purine metabolism; IMP biosynthesis via de novo pathway; 5-amino-1-(5-phospho-D-ribosyl)imidazole-4-carboxamide from 5-amino-1-(5-phospho-D-ribosyl)imidazole-4-carboxylate: step 1/2. This Neisseria meningitidis serogroup A / serotype 4A (strain DSM 15465 / Z2491) protein is Phosphoribosylaminoimidazole-succinocarboxamide synthase.